A 209-amino-acid polypeptide reads, in one-letter code: Uracil phosphoribosyltransferase (209 aa).

5-phospho-alpha-D-ribose 1-diphosphate is bound by residues Arg-79, Arg-104, and Asp-131–Ser-139. Uracil is bound by residues Ile-194 and Gly-199–Ala-201. A 5-phospho-alpha-D-ribose 1-diphosphate-binding site is contributed by Asp-200.

It belongs to the UPRTase family. The cofactor is Mg(2+).

It carries out the reaction UMP + diphosphate = 5-phospho-alpha-D-ribose 1-diphosphate + uracil. The protein operates within pyrimidine metabolism; UMP biosynthesis via salvage pathway; UMP from uracil: step 1/1. Allosterically activated by GTP. In terms of biological role, catalyzes the conversion of uracil and 5-phospho-alpha-D-ribose 1-diphosphate (PRPP) to UMP and diphosphate. The polypeptide is Uracil phosphoribosyltransferase (Ligilactobacillus salivarius (strain UCC118) (Lactobacillus salivarius)).